The primary structure comprises 175 residues: Protein LHCP TRANSLOCATION DEFECT (175 aa).

The transit peptide at 1–68 directs the protein to the chloroplast; sequence MASSSISFSC…WFKFGKNGVD (68 aa). Residues 117–149 form an ANK repeat; it reads PVDILLMLAATEGDRPKIEELLKAGADYSVKDA.

In terms of assembly, interacts with CAO/cpSRP43, but is not a component of the transit complex. Interacts with LHCP (via T14 domain), TIC40 and TIC110. Highly expressed in leaves and seedlings. Detected in roots, but not in germinating seeds.

The protein resides in the plastid. It is found in the chloroplast thylakoid membrane. It localises to the chloroplast envelope. The protein localises to the chloroplast stroma. Its function is as follows. Involved in the import of light-harvesting complex proteins (LHCP) and subsequent routing of these proteins to the chloroplast signal recognition particle (SRP) pathway. The chain is Protein LHCP TRANSLOCATION DEFECT (LTD) from Arabidopsis thaliana (Mouse-ear cress).